Consider the following 187-residue polypeptide: UPF0215 protein PAE0952 (187 aa).

This sequence belongs to the UPF0215 family.

The sequence is that of UPF0215 protein PAE0952 from Pyrobaculum aerophilum (strain ATCC 51768 / DSM 7523 / JCM 9630 / CIP 104966 / NBRC 100827 / IM2).